Here is a 155-residue protein sequence, read N- to C-terminus: Ribosome maturation factor RimP (155 aa).

The protein belongs to the RimP family.

The protein resides in the cytoplasm. Functionally, required for maturation of 30S ribosomal subunits. The chain is Ribosome maturation factor RimP from Lachnoclostridium phytofermentans (strain ATCC 700394 / DSM 18823 / ISDg) (Clostridium phytofermentans).